Reading from the N-terminus, the 530-residue chain is Sugar transport protein MST6 (530 aa).

Residues 1-18 (MAGGVVVNNGGGKDYPGK) lie on the Cytoplasmic side of the membrane. The chain crosses the membrane as a helical span at residues 19–39 (LTMFVLFACIVAATGGLIFGY). At 40 to 81 (DIGISGGVTSMNPFLIKFFPSVYRKEQAAEKNQSNQYCKFDS) the chain is on the extracellular side. The chain crosses the membrane as a helical span at residues 82–102 (PLLTMFTSSLYLAALVASFFA). Residues 103 to 119 (STVTRVAGRKWSMFGGG) lie on the Cytoplasmic side of the membrane. The helical transmembrane segment at 120–140 (VTFLVGAALNGAAKNVLMLIL) threads the bilayer. The Extracellular segment spans residues 141-142 (GR). Residues 143-163 (VLLGVGVGFANQSVPLYLSEM) traverse the membrane as a helical segment. Residues 164 to 169 (APARLR) are Cytoplasmic-facing. The helical transmembrane segment at 170-190 (GMLNIGFQLMITIGILCANLI) threads the bilayer. Over 191–204 (NYGTAKIKGGWGWR) the chain is Extracellular. The helical transmembrane segment at 205–225 (VSLALAAVPAAIIAVGALFLP) threads the bilayer. Residues 226–291 (DTPNSLIDRG…YRPQLTMAIA (66 aa)) are Cytoplasmic-facing. A helical membrane pass occupies residues 292–312 (IPLFQQLTGINVIMFYAPVLF). The Extracellular portion of the chain corresponds to 313-323 (KTLGFADDASL). The helical transmembrane segment at 324 to 344 (MSAVITGLVNVFATFVSIVTV) threads the bilayer. The Cytoplasmic segment spans residues 345–359 (DRLGRRKLFLQGGTQ). Residues 360 to 380 (MLACQIVVGSLIGAKFGFSGV) form a helical membrane-spanning segment. The Extracellular portion of the chain corresponds to 381–388 (ADIPKAYA). A helical transmembrane segment spans residues 389–409 (AFVVLFICAYVAGFAWSWGPL). The Cytoplasmic portion of the chain corresponds to 410–428 (GWLVPSEIFPLEIRSAGQS). The helical transmembrane segment at 429 to 449 (INVSVNMLFTFIIAQAFLPML) threads the bilayer. The Extracellular portion of the chain corresponds to 450–453 (CRFK). A helical membrane pass occupies residues 454–474 (FILFFFFGAWVVIMTLFVAFF). At 475 to 530 (LPETKNVPIEEMVLVWKSHWYWGRFIRDEDVHVGADVEMPAAGNRNGKVDPAKLAN) the chain is on the cytoplasmic side.

This sequence belongs to the major facilitator superfamily. Sugar transporter (TC 2.A.1.1) family. As to expression, expressed in leaf blades, leaf sheaths, anthers, ovaries and embryos. Expressed at low levels in roots and shoots.

Its subcellular location is the cell membrane. Functionally, mediates active uptake of hexoses by sugar:proton symport. Can transport glucose, fructose, mannose, galactose, xylose and ribose. In Oryza sativa subsp. japonica (Rice), this protein is Sugar transport protein MST6.